The following is a 372-amino-acid chain: Delta-type opioid receptor (372 aa).

At Met1–Ala47 the chain is on the extracellular side. Asn18 and Asn33 each carry an N-linked (GlcNAc...) asparagine glycan. A helical membrane pass occupies residues Leu48–Val75. Residues Arg76–Asn85 are Cytoplasmic-facing. Residues Ile86–Leu110 form a helical membrane-spanning segment. Residues Met111 to Lys122 are Extracellular-facing. An intrachain disulfide couples Cys121 to Cys198. A helical membrane pass occupies residues Ala123–Val144. At Asp145–Ala163 the chain is on the cytoplasmic side. Residues Lys164–Met186 form a helical membrane-spanning segment. Residues Ala187 to Ser206 lie on the Extracellular side of the membrane. Residues Trp207 to Leu238 traverse the membrane as a helical segment. Residues Arg239–Arg261 are Cytoplasmic-facing. A helical transmembrane segment spans residues Met262–Trp284. Residues Thr285–Ala299 lie on the Extracellular side of the membrane. Residues Leu300–Leu321 traverse the membrane as a helical segment. The Cytoplasmic portion of the chain corresponds to Asp322 to Ala372. Cys333 carries S-palmitoyl cysteine lipidation. A disordered region spans residues Pro340–Ala372. Over residues Arg347–Val357 the composition is skewed to basic and acidic residues.

Belongs to the G-protein coupled receptor 1 family. As to quaternary structure, may form homooligomers. Forms a heterodimer with OPRM1. Interacts with GPRASP1. Interacts with RTP4; the interaction promotes cell surface localization of the OPRD1-OPRM1 heterodimer. N-glycosylated. In terms of processing, ubiquitinated. A basal ubiquitination seems not to be related to degradation. Ubiquitination is increased upon formation of OPRM1:OPRD1 oligomers leading to proteasomal degradation; the ubiquitination is diminished by RTP4. In terms of tissue distribution, detected in oocytes (at protein level). Detected in brain cortex, hypothalamus, hippocampus and olfactory bulb. Detected in oocytes.

It is found in the cell membrane. Its function is as follows. G-protein coupled receptor that functions as a receptor for endogenous enkephalins and for a subset of other opioids. Ligand binding causes a conformation change that triggers signaling via guanine nucleotide-binding proteins (G proteins) and modulates the activity of down-stream effectors, such as adenylate cyclase. Signaling leads to the inhibition of adenylate cyclase activity. Inhibits neurotransmitter release by reducing calcium ion currents and increasing potassium ion conductance. Plays a role in the perception of pain and in opiate-mediated analgesia. Plays a role in developing analgesic tolerance to morphine. The polypeptide is Delta-type opioid receptor (OPRD1) (Homo sapiens (Human)).